The chain runs to 448 residues: Inositol hexakisphosphate kinase 2 (448 aa).

ATP contacts are provided by residues E229–L231 and D242. Substrate is bound by residues P238–G246, K244, and K258–K265. D405 serves as a coordination point for ATP. H408 is a substrate binding site.

This sequence belongs to the inositol phosphokinase (IPK) family. In terms of tissue distribution, highly expressed in brain and lung, and at slightly lower levels in liver, kidney and testis.

It is found in the nucleus. The catalysed reaction is 1D-myo-inositol hexakisphosphate + ATP = 5-diphospho-1D-myo-inositol 1,2,3,4,6-pentakisphosphate + ADP. It participates in phospholipid metabolism; phosphatidylinositol metabolism. In terms of biological role, converts inositol hexakisphosphate (InsP6) to diphosphoinositol pentakisphosphate (InsP7/PP-InsP5). May play a role in the regulation of Na(+)-dependent phosphate cotransport, possibly via its role in diphosphoinositol pentakisphosphate (InsP7/PP-InsP5) biosynthesis. In Mus musculus (Mouse), this protein is Inositol hexakisphosphate kinase 2 (Ip6k2).